A 185-amino-acid polypeptide reads, in one-letter code: Peptidyl-tRNA hydrolase (185 aa).

Tyr-14 provides a ligand contact to tRNA. The active-site Proton acceptor is His-19. The tRNA site is built by Phe-64, Asn-66, and Asn-112.

The protein belongs to the PTH family. Monomer.

It is found in the cytoplasm. It catalyses the reaction an N-acyl-L-alpha-aminoacyl-tRNA + H2O = an N-acyl-L-amino acid + a tRNA + H(+). Functionally, hydrolyzes ribosome-free peptidyl-tRNAs (with 1 or more amino acids incorporated), which drop off the ribosome during protein synthesis, or as a result of ribosome stalling. Catalyzes the release of premature peptidyl moieties from peptidyl-tRNA molecules trapped in stalled 50S ribosomal subunits, and thus maintains levels of free tRNAs and 50S ribosomes. In Alkaliphilus oremlandii (strain OhILAs) (Clostridium oremlandii (strain OhILAs)), this protein is Peptidyl-tRNA hydrolase.